The following is a 529-amino-acid chain: uncharacterized protein (529 aa).

An Arf-GAP domain is found at 13–129; sequence QTAMRKMRAL…LSTLCQEAQR (117 aa). A C4-type zinc finger spans residues 28–51; it reads CFDCGARNPTWCTVTYGVFLCIDC. Basic and acidic residues predominate over residues 291–301; sequence QMEAKVAKDPT. Disordered stretches follow at residues 291–313, 335–357, 398–424, and 468–493; these read QMEA…GMGG, VLTF…DDKY, KSRY…GASP, and FGSE…SDLK. The segment covering 399–420 has biased composition (low complexity); sequence SRYTASSSSSSTSRAPTTRLTA. The span at 476–487 shows a compositional bias: polar residues; it reads NGSQQRQSSQVP.

GTPase-activating protein for the ADP ribosylation factor family. This is an uncharacterized protein from Caenorhabditis elegans.